The following is a 95-amino-acid chain: Integration host factor subunit beta (95 aa).

This sequence belongs to the bacterial histone-like protein family. As to quaternary structure, heterodimer of an alpha and a beta chain.

Functionally, this protein is one of the two subunits of integration host factor, a specific DNA-binding protein that functions in genetic recombination as well as in transcriptional and translational control. In Jannaschia sp. (strain CCS1), this protein is Integration host factor subunit beta.